The chain runs to 555 residues: Esterase-5A (555 aa).

The N-terminal stretch at 1-19 (MHLVRWLICLIQLWIQLGA) is a signal peptide. A disulfide bond links Cys87 and Cys106. 2 N-linked (GlcNAc...) asparagine glycosylation sites follow: Asn95 and Asn116. Catalysis depends on Ser210, which acts as the Acyl-ester intermediate. Cys262 and Cys274 are disulfide-bonded. N-linked (GlcNAc...) asparagine glycans are attached at residues Asn479 and Asn510. Cys518 and Cys539 are oxidised to a cystine.

This sequence belongs to the type-B carboxylesterase/lipase family.

It is found in the secreted. The catalysed reaction is a carboxylic ester + H2O = an alcohol + a carboxylate + H(+). The polypeptide is Esterase-5A (Est-5A) (Drosophila miranda (Fruit fly)).